Here is a 98-residue protein sequence, read N- to C-terminus: Acylphosphatase (98 aa).

The region spanning Thr12 to Gln98 is the Acylphosphatase-like domain. Catalysis depends on residues Arg27 and Asn45.

The protein belongs to the acylphosphatase family.

The enzyme catalyses an acyl phosphate + H2O = a carboxylate + phosphate + H(+). This Burkholderia lata (strain ATCC 17760 / DSM 23089 / LMG 22485 / NCIMB 9086 / R18194 / 383) protein is Acylphosphatase (acyP).